Here is a 449-residue protein sequence, read N- to C-terminus: UDP-N-acetylmuramoyl-tripeptide--D-alanyl-D-alanine ligase (449 aa).

Residue G106–S112 participates in ATP binding.

It belongs to the MurCDEF family. MurF subfamily.

It localises to the cytoplasm. It catalyses the reaction D-alanyl-D-alanine + UDP-N-acetyl-alpha-D-muramoyl-L-alanyl-gamma-D-glutamyl-meso-2,6-diaminopimelate + ATP = UDP-N-acetyl-alpha-D-muramoyl-L-alanyl-gamma-D-glutamyl-meso-2,6-diaminopimeloyl-D-alanyl-D-alanine + ADP + phosphate + H(+). Its pathway is cell wall biogenesis; peptidoglycan biosynthesis. Its function is as follows. Involved in cell wall formation. Catalyzes the final step in the synthesis of UDP-N-acetylmuramoyl-pentapeptide, the precursor of murein. This Rickettsia prowazekii (strain Madrid E) protein is UDP-N-acetylmuramoyl-tripeptide--D-alanyl-D-alanine ligase.